Consider the following 334-residue polypeptide: Lipoyl synthase (334 aa).

The segment at 8–33 (LNNDTRPKVEAPARPRHPEKAHRPDT) is disordered. Residues 12–33 (TRPKVEAPARPRHPEKAHRPDT) show a composition bias toward basic and acidic residues. [4Fe-4S] cluster is bound by residues cysteine 68, cysteine 73, cysteine 79, cysteine 94, cysteine 98, cysteine 101, and serine 307. Positions 80–296 (WEKRHATFMI…ETTAYAKGFL (217 aa)) constitute a Radical SAM core domain.

It belongs to the radical SAM superfamily. Lipoyl synthase family. It depends on [4Fe-4S] cluster as a cofactor.

The protein resides in the cytoplasm. The catalysed reaction is [[Fe-S] cluster scaffold protein carrying a second [4Fe-4S](2+) cluster] + N(6)-octanoyl-L-lysyl-[protein] + 2 oxidized [2Fe-2S]-[ferredoxin] + 2 S-adenosyl-L-methionine + 4 H(+) = [[Fe-S] cluster scaffold protein] + N(6)-[(R)-dihydrolipoyl]-L-lysyl-[protein] + 4 Fe(3+) + 2 hydrogen sulfide + 2 5'-deoxyadenosine + 2 L-methionine + 2 reduced [2Fe-2S]-[ferredoxin]. It functions in the pathway protein modification; protein lipoylation via endogenous pathway; protein N(6)-(lipoyl)lysine from octanoyl-[acyl-carrier-protein]: step 2/2. In terms of biological role, catalyzes the radical-mediated insertion of two sulfur atoms into the C-6 and C-8 positions of the octanoyl moiety bound to the lipoyl domains of lipoate-dependent enzymes, thereby converting the octanoylated domains into lipoylated derivatives. This Methylorubrum populi (strain ATCC BAA-705 / NCIMB 13946 / BJ001) (Methylobacterium populi) protein is Lipoyl synthase.